The chain runs to 381 residues: cAMP-dependent protein kinase type I-alpha regulatory subunit (381 aa).

Residue Met1 is modified to N-acetylmethionine. Ala2 bears the N-acetylalanine; in cAMP-dependent protein kinase type I-alpha regulatory subunit, N-terminally processed mark. The interval 2 to 136 (ASGSMATSEE…ALAKAIEKNV (135 aa)) is dimerization and phosphorylation. Ser3 bears the Phosphoserine mark. The interval 73–96 (IRTDSREDEISPPPPNPVVKGRRR) is disordered. Phosphothreonine is present on Thr75. Phosphoserine occurs at positions 77 and 83. The Pseudophosphorylation motif signature appears at 96–100 (RRGAI). Phosphoserine is present on Ser101. 3',5'-cyclic AMP-binding positions include 137-254 (LFSH…SKVS), Glu202, Arg211, 255-381 (ILES…SLSV), Glu326, and Arg335. Ser258 carries the phosphoserine modification.

This sequence belongs to the cAMP-dependent kinase regulatory chain family. The inactive holoenzyme is composed of two regulatory chains and two catalytic chains. Activation by cAMP releases the two active catalytic monomers and the regulatory dimer. Interacts with PRKACA and PRKACB. PRKAR1A also interacts with RFC2; the complex may be involved in cell survival. Interacts with AKAP4. Interacts with RARA; the interaction occurs in the presence of cAMP or FSH and regulates RARA transcriptional activity. Interacts with the phosphorylated form of PJA2. Interacts with PRKX; regulates this cAMP-dependent protein kinase. Interacts with CBFA2T3. Interacts with smAKAP; this interaction may target PRKAR1A to the plasma membrane. Interacts with AICDA. In terms of processing, the pseudophosphorylation site binds to the substrate-binding region of the catalytic chain, resulting in the inhibition of its activity.

It localises to the cell membrane. Its function is as follows. Regulatory subunit of the cAMP-dependent protein kinases involved in cAMP signaling in cells. This chain is cAMP-dependent protein kinase type I-alpha regulatory subunit (Prkar1a), found in Mus musculus (Mouse).